The primary structure comprises 76 residues: Sulfur carrier protein TusA (76 aa).

Catalysis depends on Cys15, which acts as the Cysteine persulfide intermediate.

Belongs to the sulfur carrier protein TusA family. As to quaternary structure, mostly a monomer, a small portion forms homodimer via intermolecular disulfide bonds. Tightly interacts with DsrEFH.

The protein resides in the cytoplasm. The protein operates within energy metabolism; sulfur metabolism. Sulfur carrier protein involved in sulfur trafficking for oxidative dissimilatory sulfur metabolism. Component of a sulfur relay system that starts with the sulfur-mobilizing rhodanese-like protein Rhd_2599 (Alvin_2599), which transfers the sulfur from a low-molecular-weight thiol, maybe glutathione, to the TusA protein (Alvin_2600); TusA serves as the sulfur donor for DsrEFH, which persulfurates DsrC; persulfurated DsrC very probably serves as a direct substrate for reverse-acting sulfite reductase, DsrAB. TusA seems to be not exclusively dedicated to sulfur oxidation and may have other important roles in the cell. Might also act as a sulfur mediator required for 2-thiouridine formation of tRNA. This chain is Sulfur carrier protein TusA, found in Allochromatium vinosum (strain ATCC 17899 / DSM 180 / NBRC 103801 / NCIMB 10441 / D) (Chromatium vinosum).